Consider the following 508-residue polypeptide: Ras association domain-containing protein 10 (508 aa).

A Ras-associating domain is found at 1–133; sequence MDPSEKKISV…VRFVLVRSEA (133 aa). Disordered stretches follow at residues 51 to 81 and 186 to 221; these read RRGL…AMPP and KLNR…ESAS. Acidic residues predominate over residues 66 to 78; that stretch reads EPPDENDEDDDDA. Positions 195–214 are enriched in low complexity; that stretch reads PSSPCSSTSSSTASSCSSSA. 2 coiled-coil regions span residues 235-266 and 319-358; these read QDHT…DRMR and LEEL…NQRW. A disordered region spans residues 473 to 508; it reads GLAKSCPGNDEDSDTGLSSMHSQDSDSVPPVCESLV. Positions 487–498 are enriched in polar residues; that stretch reads TGLSSMHSQDSD.

Expressed in neural progenitor cells (at protein level).

It localises to the cytoplasm. The protein resides in the cytosol. The protein localises to the cytoskeleton. Its subcellular location is the microtubule organizing center. It is found in the centrosome. It localises to the spindle pole. Plays an important role in regulating embryonic neurogenesis. In Mus musculus (Mouse), this protein is Ras association domain-containing protein 10 (Rassf10).